The following is a 280-amino-acid chain: Protein FLOURY 1-like (280 aa).

A helical transmembrane segment spans residues 22–42 (GFGFGIFVIGCSSQFFNLVFL). Residues 153–187 (VALSETELDEKNHHGEEEESEDEEESQSQNDEDQL) form a disordered region. The segment covering 169–187 (EEESEDEEESQSQNDEDQL) has biased composition (acidic residues). The region spanning 188-280 (LDVITLRTMV…LDDDEDKIQM (93 aa)) is the GTD-binding domain.

The protein resides in the membrane. This chain is Protein FLOURY 1-like, found in Arabidopsis thaliana (Mouse-ear cress).